Here is a 93-residue protein sequence, read N- to C-terminus: RNA-binding protein Hfq (93 aa).

The region spanning 11 to 71 is the Sm domain; sequence DVFLNHVRKS…ISTVMPGAPI (61 aa).

The protein belongs to the Hfq family. As to quaternary structure, homohexamer.

Its function is as follows. RNA chaperone that binds small regulatory RNA (sRNAs) and mRNAs to facilitate mRNA translational regulation in response to envelope stress, environmental stress and changes in metabolite concentrations. Also binds with high specificity to tRNAs. The polypeptide is RNA-binding protein Hfq (Granulibacter bethesdensis (strain ATCC BAA-1260 / CGDNIH1)).